The chain runs to 222 residues: Eukaryotic translation initiation factor 3 subunit K (222 aa).

One can recognise a PCI domain in the interval 46-208; sequence YDLEANLAVL…KIKTKNITEK (163 aa).

Belongs to the eIF-3 subunit K family. As to quaternary structure, component of the eukaryotic translation initiation factor 3 (eIF-3) complex. The eIF-3 complex interacts with pix.

It localises to the cytoplasm. Functionally, component of the eukaryotic translation initiation factor 3 (eIF-3) complex, which is involved in protein synthesis of a specialized repertoire of mRNAs and, together with other initiation factors, stimulates binding of mRNA and methionyl-tRNAi to the 40S ribosome. The eIF-3 complex specifically targets and initiates translation of a subset of mRNAs involved in cell proliferation. In Drosophila mojavensis (Fruit fly), this protein is Eukaryotic translation initiation factor 3 subunit K.